We begin with the raw amino-acid sequence, 156 residues long: Small ribosomal subunit protein uS7 (156 aa).

It belongs to the universal ribosomal protein uS7 family. In terms of assembly, part of the 30S ribosomal subunit. Contacts proteins S9 and S11.

In terms of biological role, one of the primary rRNA binding proteins, it binds directly to 16S rRNA where it nucleates assembly of the head domain of the 30S subunit. Is located at the subunit interface close to the decoding center, probably blocks exit of the E-site tRNA. In Dechloromonas aromatica (strain RCB), this protein is Small ribosomal subunit protein uS7.